Consider the following 409-residue polypeptide: Single Ig IL-1-related receptor (409 aa).

The Extracellular segment spans residues 1 to 117 (MAGVCDMAPN…TLWRAGPAGH (117 aa)). The Ig-like C2-type domain occupies 9 to 108 (PNFLSPSEDQ…VWNVSSHSFT (100 aa)). N-linked (GlcNAc...) asparagine glycosylation is found at N31, N58, N73, N85, and N101. C32 and C97 are joined by a disulfide. The helical; Signal-anchor for type III membrane protein transmembrane segment at 118 to 138 (VAAVLASLLVLVVLLLVALLY) threads the bilayer. Over 139–409 (VKCRLNMLLW…FYCLVSEDDV (271 aa)) the chain is Cytoplasmic. In terms of domain architecture, TIR spans 162-306 (KLYDAYVSYS…DFWKELQLAL (145 aa)). The residue at position 382 (S382) is a Phosphoserine.

It belongs to the interleukin-1 receptor family. In terms of assembly, interacts with IL1R1, IRAK1, TLR4, TLR5, TLR9 and TRAF6. Upon IL-1 stimulation found in a complex at least composed of IL1R1, SIGIRR, MYD88, IRAK1 and TRAF6. Upon stimulation with LPC found in a complex at least composed of TLR4, SIG1IR, MYD88, IRAK1 and TRAF6. Interacts with PALM3. Expressed at high levels in kidney, and at moderate levels in colon, small intestine, lung, spleen and liver. Not expressed in brain and muscle. Expressed at high levels in epithelial cells, at moderate levels in splenocytes, and at low or undetectable levels in fibroblasts or endothelial cells. Expressed in mucosal and dendritic cells.

Its subcellular location is the membrane. Acts as a negative regulator of the Toll-like and IL-1R receptor signaling pathways. Attenuates the recruitment of receptor-proximal signaling components to the TLR4 receptor, probably through an TIR-TIR domain interaction with TLR4. Through its extracellular domain interferes with the heterodimerization of Il1R1 and IL1RAP. The sequence is that of Single Ig IL-1-related receptor (Sigirr) from Mus musculus (Mouse).